A 176-amino-acid chain; its full sequence is Crossover junction endodeoxyribonuclease RuvC (176 aa).

Residues Asp-7, Glu-67, and Asp-139 contribute to the active site. Positions 7, 67, and 139 each coordinate Mg(2+).

This sequence belongs to the RuvC family. As to quaternary structure, homodimer which binds Holliday junction (HJ) DNA. The HJ becomes 2-fold symmetrical on binding to RuvC with unstacked arms; it has a different conformation from HJ DNA in complex with RuvA. In the full resolvosome a probable DNA-RuvA(4)-RuvB(12)-RuvC(2) complex forms which resolves the HJ. The cofactor is Mg(2+).

It localises to the cytoplasm. It carries out the reaction Endonucleolytic cleavage at a junction such as a reciprocal single-stranded crossover between two homologous DNA duplexes (Holliday junction).. Its function is as follows. The RuvA-RuvB-RuvC complex processes Holliday junction (HJ) DNA during genetic recombination and DNA repair. Endonuclease that resolves HJ intermediates. Cleaves cruciform DNA by making single-stranded nicks across the HJ at symmetrical positions within the homologous arms, yielding a 5'-phosphate and a 3'-hydroxyl group; requires a central core of homology in the junction. The consensus cleavage sequence is 5'-(A/T)TT(C/G)-3'. Cleavage occurs on the 3'-side of the TT dinucleotide at the point of strand exchange. HJ branch migration catalyzed by RuvA-RuvB allows RuvC to scan DNA until it finds its consensus sequence, where it cleaves and resolves the cruciform DNA. This Pelobacter propionicus (strain DSM 2379 / NBRC 103807 / OttBd1) protein is Crossover junction endodeoxyribonuclease RuvC.